The chain runs to 613 residues: Phosphomethylpyrimidine synthase (613 aa).

Residues N215, M244, Y273, H309, 329–331 (SRG), 370–373 (DGLR), and E409 each bind substrate. H413 contacts Zn(2+). Y436 is a binding site for substrate. Zn(2+) is bound at residue H477. The [4Fe-4S] cluster site is built by C557, C560, and C565.

The protein belongs to the ThiC family. In terms of assembly, homodimer. The cofactor is [4Fe-4S] cluster.

The enzyme catalyses 5-amino-1-(5-phospho-beta-D-ribosyl)imidazole + S-adenosyl-L-methionine = 4-amino-2-methyl-5-(phosphooxymethyl)pyrimidine + CO + 5'-deoxyadenosine + formate + L-methionine + 3 H(+). It participates in cofactor biosynthesis; thiamine diphosphate biosynthesis. Functionally, catalyzes the synthesis of the hydroxymethylpyrimidine phosphate (HMP-P) moiety of thiamine from aminoimidazole ribotide (AIR) in a radical S-adenosyl-L-methionine (SAM)-dependent reaction. The sequence is that of Phosphomethylpyrimidine synthase from Paramagnetospirillum magneticum (strain ATCC 700264 / AMB-1) (Magnetospirillum magneticum).